The chain runs to 123 residues: Large ribosomal subunit protein uL24 (123 aa).

A disordered region spans residues 100–123; the sequence is RRPDGSTYKAERSVRISRKTGKEI.

This sequence belongs to the universal ribosomal protein uL24 family. In terms of assembly, part of the 50S ribosomal subunit.

In terms of biological role, one of two assembly initiator proteins, it binds directly to the 5'-end of the 23S rRNA, where it nucleates assembly of the 50S subunit. One of the proteins that surrounds the polypeptide exit tunnel on the outside of the subunit. This is Large ribosomal subunit protein uL24 from Nocardioides sp. (strain ATCC BAA-499 / JS614).